The primary structure comprises 338 residues: Transcription factor GRA2 (338 aa).

Disordered regions lie at residues 171–230 (CQDS…PHYA) and 256–277 (TQHE…DGGS). Residues 174–203 (SGVSQPSNLADDTLGQGQPVSTVVQPQHPG) are compositionally biased toward polar residues. Positions 223 to 236 (KRQRPHYAIEKRYR) are basic motif. In terms of domain architecture, bHLH spans 223-303 (KRQRPHYAIE…NQATLCIRQL (81 aa)). The helix-loop-helix motif stretch occupies residues 237–303 (AGLQERFEAL…NQATLCIRQL (67 aa)).

The protein resides in the nucleus. Transcription factor that specifically regulates the expression of the gene cluster that mediates the biosynthesis of gramillins A and B, bicyclic lipopeptides that induce cell death in maize leaves but not in wheat leaves. The polypeptide is Transcription factor GRA2 (GRA2) (Gibberella zeae (strain ATCC MYA-4620 / CBS 123657 / FGSC 9075 / NRRL 31084 / PH-1) (Wheat head blight fungus)).